Reading from the N-terminus, the 388-residue chain is Succinate--CoA ligase [ADP-forming] subunit beta (388 aa).

The region spanning 9–244 (KQLFAEFGLP…ASQEDAREAH (236 aa)) is the ATP-grasp domain. ATP-binding positions include lysine 46, 53–55 (GRG), glutamate 99, serine 102, and glutamate 107. Residues asparagine 199 and aspartate 213 each contribute to the Mg(2+) site. Residues asparagine 264 and 321 to 323 (GIV) contribute to the substrate site.

This sequence belongs to the succinate/malate CoA ligase beta subunit family. Heterotetramer of two alpha and two beta subunits. Mg(2+) is required as a cofactor.

It catalyses the reaction succinate + ATP + CoA = succinyl-CoA + ADP + phosphate. It carries out the reaction GTP + succinate + CoA = succinyl-CoA + GDP + phosphate. It functions in the pathway carbohydrate metabolism; tricarboxylic acid cycle; succinate from succinyl-CoA (ligase route): step 1/1. Functionally, succinyl-CoA synthetase functions in the citric acid cycle (TCA), coupling the hydrolysis of succinyl-CoA to the synthesis of either ATP or GTP and thus represents the only step of substrate-level phosphorylation in the TCA. The beta subunit provides nucleotide specificity of the enzyme and binds the substrate succinate, while the binding sites for coenzyme A and phosphate are found in the alpha subunit. The protein is Succinate--CoA ligase [ADP-forming] subunit beta of Vibrio cholerae serotype O1 (strain ATCC 39541 / Classical Ogawa 395 / O395).